We begin with the raw amino-acid sequence, 141 residues long: Large ribosomal subunit protein uL11 (141 aa).

It belongs to the universal ribosomal protein uL11 family. As to quaternary structure, part of the ribosomal stalk of the 50S ribosomal subunit. Interacts with L10 and the large rRNA to form the base of the stalk. L10 forms an elongated spine to which L12 dimers bind in a sequential fashion forming a multimeric L10(L12)X complex. In terms of processing, one or more lysine residues are methylated.

In terms of biological role, forms part of the ribosomal stalk which helps the ribosome interact with GTP-bound translation factors. The chain is Large ribosomal subunit protein uL11 from Clostridium perfringens (strain ATCC 13124 / DSM 756 / JCM 1290 / NCIMB 6125 / NCTC 8237 / Type A).